The chain runs to 278 residues: Release factor glutamine methyltransferase (278 aa).

S-adenosyl-L-methionine contacts are provided by residues 117–121 (GTGSG), Asp140, and Asn184. 184 to 187 (NPPY) is a substrate binding site.

The protein belongs to the protein N5-glutamine methyltransferase family. PrmC subfamily.

The enzyme catalyses L-glutaminyl-[peptide chain release factor] + S-adenosyl-L-methionine = N(5)-methyl-L-glutaminyl-[peptide chain release factor] + S-adenosyl-L-homocysteine + H(+). In terms of biological role, methylates the class 1 translation termination release factors RF1/PrfA and RF2/PrfB on the glutamine residue of the universally conserved GGQ motif. This is Release factor glutamine methyltransferase from Bacteroides thetaiotaomicron (strain ATCC 29148 / DSM 2079 / JCM 5827 / CCUG 10774 / NCTC 10582 / VPI-5482 / E50).